The following is a 208-amino-acid chain: Translation initiation factor IF-3 (208 aa).

The protein belongs to the IF-3 family. As to quaternary structure, monomer.

Its subcellular location is the cytoplasm. Its function is as follows. IF-3 binds to the 30S ribosomal subunit and shifts the equilibrium between 70S ribosomes and their 50S and 30S subunits in favor of the free subunits, thus enhancing the availability of 30S subunits on which protein synthesis initiation begins. The protein is Translation initiation factor IF-3 of Parabacteroides distasonis (strain ATCC 8503 / DSM 20701 / CIP 104284 / JCM 5825 / NCTC 11152).